The following is a 457-amino-acid chain: Putative metabolite transport protein YwtG (457 aa).

12 helical membrane passes run 7–27 (IWLYFFGALGGALYGYDTGVI), 38–58 (LGLNAFTEGLVVSSLLVGAIL), 75–95 (AIMAAALLFCIGGLGVALAPN), 97–117 (GVMVLFRIILGLAVGTSTTIV), 136–156 (LNQLMITVGILLSYIVNYIFA), 163–183 (WMLGLAAVPSLLLLIGILFMP), 240–260 (ALIAGLGLAFLQQFIGTNTII), 276–296 (ASILGTVGIGTVNVLMTLVAI), 309–329 (LFGNAGMVISLIVLALVNLFF), 340–360 (VICLGVFIVVFAVSWGPVVWV), 377–397 (VSTLMLHVGTLIVSLTYPILM), and 400–420 (IGISYLFLIYAAIGIMAFLFV). The segment at 438–457 (DLRDKNGQGGAAGKQQTVGT) is disordered.

Belongs to the major facilitator superfamily. Sugar transporter (TC 2.A.1.1) family.

Its subcellular location is the cell membrane. This chain is Putative metabolite transport protein YwtG (ywtG), found in Bacillus subtilis (strain 168).